The chain runs to 503 residues: MELIPNLSIETWVLLAISLVLIYIYGTYSHGTFKKLGIPGPKPLPFFGTILGYHDGTWKFDETCYKKYGKIWGFYDGRVPVLAIADPEIIKTVLVKECYSNFTNRRSFGPVGFMKKSITISKDEEWKRLRTLLSPAFTSGKLKEMFPIIGQYGDTLVKNLRREEEKGKPVNMKEILGAYSMDVITGTSFGVNVDSLNNPEDPFVQKARKILKFNFFDPFILSIILFPFLTTIYDLLRFSIFPRQSTNFFKKFITTMKKNRLHSNQKTRMDFFQLMMNTQNSKGKESQKALSDLEMAAQAIIFIFAGYESTSTSICLVLYELATHPDVQKKLHDEIDSALPNKAPVTYDVLMGMEYLDMVINEGLRLYPIANRLERISKKAVEINGLFIPKGITVMVPTYPLHRDPEYWPEPEEFRPERFSKENKGSIDPYVYMPFGNGPRNCIGMRFALLSMKLAVVSVLQNFTLQTCEQTENHLKFARQIILQPENPIILKIISRDKPITGA.

Residue Cys442 participates in heme binding.

The protein belongs to the cytochrome P450 family. It depends on heme as a cofactor.

It localises to the endoplasmic reticulum membrane. The protein localises to the microsome membrane. The enzyme catalyses lithocholate + reduced [NADPH--hemoprotein reductase] + O2 = 6beta-hydroxylithocholate + oxidized [NADPH--hemoprotein reductase] + H2O + H(+). In terms of biological role, catalyzes the 6 beta-hydroxylation of lithocholic acid and steroid hormones. The polypeptide is Lithocholate 6-beta-hydroxylase (CYP3A10) (Mesocricetus auratus (Golden hamster)).